Here is a 474-residue protein sequence, read N- to C-terminus: Glutamate--tRNA ligase (474 aa).

Positions 9-19 match the 'HIGH' region motif; it reads PSPTGYLHVGG. The 'KMSKS' region motif lies at 240 to 244; the sequence is KLSKR. Lysine 243 contributes to the ATP binding site.

The protein belongs to the class-I aminoacyl-tRNA synthetase family. Glutamate--tRNA ligase type 1 subfamily. In terms of assembly, monomer.

The protein resides in the cytoplasm. The enzyme catalyses tRNA(Glu) + L-glutamate + ATP = L-glutamyl-tRNA(Glu) + AMP + diphosphate. Its function is as follows. Catalyzes the attachment of glutamate to tRNA(Glu) in a two-step reaction: glutamate is first activated by ATP to form Glu-AMP and then transferred to the acceptor end of tRNA(Glu). The sequence is that of Glutamate--tRNA ligase from Aliivibrio fischeri (strain ATCC 700601 / ES114) (Vibrio fischeri).